The chain runs to 1073 residues: Carbamoyl phosphate synthase large chain (1073 aa).

Residues 2-403 (PKRTDIKSIL…SLQKALRGLE (402 aa)) form a carboxyphosphate synthetic domain region. ATP contacts are provided by R129, R169, G175, G176, E208, L210, E215, G241, I242, H243, Q285, and E299. One can recognise an ATP-grasp 1 domain in the interval 133 to 328 (DVAMKKIGLE…IAKVAAKLAV (196 aa)). 3 residues coordinate Mg(2+): Q285, E299, and N301. Residues Q285, E299, and N301 each contribute to the Mn(2+) site. The interval 404 to 553 (VGATGFDPKV…YSTYEEECEA (150 aa)) is oligomerization domain. Residues 554 to 936 (NPSTDREKIM…AFAKAQLGSN (383 aa)) are carbamoyl phosphate synthetic domain. The region spanning 679-870 (QHAVERLKLK…LAKVAARVMA (192 aa)) is the ATP-grasp 2 domain. The ATP site is built by R715, H754, L756, E761, G786, V787, H788, S789, Q829, and E841. Mg(2+)-binding residues include Q829, E841, and N843. Residues Q829, E841, and N843 each coordinate Mn(2+). Residues 937-1073 (STMKKHGRAL…SVQEMHAQIK (137 aa)) enclose the MGS-like domain. An allosteric domain region spans residues 937 to 1073 (STMKKHGRAL…SVQEMHAQIK (137 aa)).

It belongs to the CarB family. As to quaternary structure, composed of two chains; the small (or glutamine) chain promotes the hydrolysis of glutamine to ammonia, which is used by the large (or ammonia) chain to synthesize carbamoyl phosphate. Tetramer of heterodimers (alpha,beta)4. Mg(2+) serves as cofactor. It depends on Mn(2+) as a cofactor.

The catalysed reaction is hydrogencarbonate + L-glutamine + 2 ATP + H2O = carbamoyl phosphate + L-glutamate + 2 ADP + phosphate + 2 H(+). It carries out the reaction hydrogencarbonate + NH4(+) + 2 ATP = carbamoyl phosphate + 2 ADP + phosphate + 2 H(+). It participates in amino-acid biosynthesis; L-arginine biosynthesis; carbamoyl phosphate from bicarbonate: step 1/1. It functions in the pathway pyrimidine metabolism; UMP biosynthesis via de novo pathway; (S)-dihydroorotate from bicarbonate: step 1/3. In terms of biological role, large subunit of the glutamine-dependent carbamoyl phosphate synthetase (CPSase). CPSase catalyzes the formation of carbamoyl phosphate from the ammonia moiety of glutamine, carbonate, and phosphate donated by ATP, constituting the first step of 2 biosynthetic pathways, one leading to arginine and/or urea and the other to pyrimidine nucleotides. The large subunit (synthetase) binds the substrates ammonia (free or transferred from glutamine from the small subunit), hydrogencarbonate and ATP and carries out an ATP-coupled ligase reaction, activating hydrogencarbonate by forming carboxy phosphate which reacts with ammonia to form carbamoyl phosphate. This is Carbamoyl phosphate synthase large chain from Escherichia coli O6:H1 (strain CFT073 / ATCC 700928 / UPEC).